A 351-amino-acid polypeptide reads, in one-letter code: UDP-N-acetylglucosamine--N-acetylmuramyl-(pentapeptide) pyrophosphoryl-undecaprenol N-acetylglucosamine transferase (351 aa).

Residues 13-15 (TGG), Asn125, Arg161, Ser189, Ile241, 260-265 (ALTVCE), and Gln285 each bind UDP-N-acetyl-alpha-D-glucosamine.

It belongs to the glycosyltransferase 28 family. MurG subfamily.

The protein localises to the cell inner membrane. It carries out the reaction di-trans,octa-cis-undecaprenyl diphospho-N-acetyl-alpha-D-muramoyl-L-alanyl-D-glutamyl-meso-2,6-diaminopimeloyl-D-alanyl-D-alanine + UDP-N-acetyl-alpha-D-glucosamine = di-trans,octa-cis-undecaprenyl diphospho-[N-acetyl-alpha-D-glucosaminyl-(1-&gt;4)]-N-acetyl-alpha-D-muramoyl-L-alanyl-D-glutamyl-meso-2,6-diaminopimeloyl-D-alanyl-D-alanine + UDP + H(+). It participates in cell wall biogenesis; peptidoglycan biosynthesis. In terms of biological role, cell wall formation. Catalyzes the transfer of a GlcNAc subunit on undecaprenyl-pyrophosphoryl-MurNAc-pentapeptide (lipid intermediate I) to form undecaprenyl-pyrophosphoryl-MurNAc-(pentapeptide)GlcNAc (lipid intermediate II). In Haemophilus influenzae (strain PittEE), this protein is UDP-N-acetylglucosamine--N-acetylmuramyl-(pentapeptide) pyrophosphoryl-undecaprenol N-acetylglucosamine transferase.